The chain runs to 292 residues: Protein rogdi homolog (292 aa).

Residues 1–12 (MEVQSLTITTNY) are compositionally biased toward polar residues. The tract at residues 1-25 (MEVQSLTITTNYPPKPASPNPQDIR) is disordered.

This sequence belongs to the rogdi family.

Its subcellular location is the nucleus envelope. The chain is Protein rogdi homolog from Caenorhabditis elegans.